Here is a 209-residue protein sequence, read N- to C-terminus: Kunitz trypsin inhibitor 1 (209 aa).

An N-terminal signal peptide occupies residues 1–22 (MKATISITTIFLVVALAAPSLA). 2 disulfides stabilise this stretch: Cys-63–Cys-107 and Cys-154–Cys-162. N-linked (GlcNAc...) asparagine glycosylation occurs at Asn-156.

Belongs to the protease inhibitor I3 (leguminous Kunitz-type inhibitor) family.

In terms of biological role, exhibits Kunitz trypsin protease inhibitor activity. In Arabidopsis thaliana (Mouse-ear cress), this protein is Kunitz trypsin inhibitor 1.